Here is a 689-residue protein sequence, read N- to C-terminus: DNA topoisomerase 1 (689 aa).

Residues 3-113 (DNLVIVESPA…KENRVVFNEI (111 aa)) enclose the Toprim domain. The Mg(2+) site is built by Glu9 and Asp82. Positions 129–557 (EMNLVDAQQA…FFSSFKQDVE (429 aa)) constitute a Topo IA-type catalytic domain. An interaction with DNA region spans residues 163 to 168 (SAGRVQ). Tyr298 functions as the O-(5'-phospho-DNA)-tyrosine intermediate in the catalytic mechanism. Positions 328–357 (SKRKASGKQGDQDAHEAIRPSSTMRTPDDM) are disordered. 3 C4-type zinc fingers span residues 577–603 (CEVCGSPMVIKMGRYGKFMACSNFPDC), 617–645 (CPKCNDGDVVERKSKKNRVFYGCSKYPEC), and 658–681 (CPKCNQYLVENKKGKTTQVICSNC).

The protein belongs to the type IA topoisomerase family. In terms of assembly, monomer. Requires Mg(2+) as cofactor.

The catalysed reaction is ATP-independent breakage of single-stranded DNA, followed by passage and rejoining.. In terms of biological role, releases the supercoiling and torsional tension of DNA, which is introduced during the DNA replication and transcription, by transiently cleaving and rejoining one strand of the DNA duplex. Introduces a single-strand break via transesterification at a target site in duplex DNA. The scissile phosphodiester is attacked by the catalytic tyrosine of the enzyme, resulting in the formation of a DNA-(5'-phosphotyrosyl)-enzyme intermediate and the expulsion of a 3'-OH DNA strand. The free DNA strand then undergoes passage around the unbroken strand, thus removing DNA supercoils. Finally, in the religation step, the DNA 3'-OH attacks the covalent intermediate to expel the active-site tyrosine and restore the DNA phosphodiester backbone. This is DNA topoisomerase 1 from Staphylococcus aureus (strain N315).